A 436-amino-acid chain; its full sequence is Mannitol-binding protein (436 aa).

Residues 1–22 (MNDSIKACLAAACLALPLLAQG) form the signal peptide.

Belongs to the bacterial solute-binding protein 1 family.

Its subcellular location is the periplasm. In terms of biological role, binds mannitol with high affinity. The chain is Mannitol-binding protein from Pseudomonas aeruginosa (strain ATCC 15692 / DSM 22644 / CIP 104116 / JCM 14847 / LMG 12228 / 1C / PRS 101 / PAO1).